The following is a 378-amino-acid chain: Mitogen-activated protein kinase mpkC (378 aa).

The Protein kinase domain maps to 20–300 (YVNPQPIGMG…AQDALRHPYL (281 aa)). ATP is bound by residues 26–34 (IGMGSFGLV) and Lys49. Asp141 functions as the Proton acceptor in the catalytic mechanism.

It belongs to the protein kinase superfamily. Ser/Thr protein kinase family. MAP kinase subfamily. It depends on Mg(2+) as a cofactor.

It localises to the nucleus. The catalysed reaction is L-seryl-[protein] + ATP = O-phospho-L-seryl-[protein] + ADP + H(+). It carries out the reaction L-threonyl-[protein] + ATP = O-phospho-L-threonyl-[protein] + ADP + H(+). With respect to regulation, activated by threonine and tyrosine phosphorylation. Its function is as follows. Mitogen-activated protein kinase (MAPK), part of the high-osmolarity glycerol (HOG) pathway. With sakA, plays a role in the osmotic and oxidative stress responses. Involved in paradoxical growth, the cell wall integrity (CWI) pathway and biofilm formation. SakA and mpkC collaborate during virulence and mpkC could act by modulating sakA activity upon exposure to several types of stresses and during cell wall biosynthesis. This is Mitogen-activated protein kinase mpkC from Aspergillus fumigatus (strain CBS 144.89 / FGSC A1163 / CEA10) (Neosartorya fumigata).